We begin with the raw amino-acid sequence, 1672 residues long: Probable outer membrane protein PmpB (1672 aa).

The signal sequence occupies residues 1–14 (MSSMKWLSATAVFA). Disordered stretches follow at residues 69 to 122 (IPVK…GGAF), 203 to 263 (NTAE…GSGG), 384 to 415 (EAQTNKSSVTAASQSGPNTTPTPTPPVTAKGG), and 734 to 765 (STGVATTATTSQSPTVSSFLPRATAGSSPAPA). Composition is skewed to low complexity over residues 77–88 (DDSSTSTPTTSS), 100–111 (SSSSSPNSGDTS), and 203–234 (NTAEVVPEETTPNPNPGTQTTTSQPSPTSKVQ). Polar residues-rich tracts occupy residues 235–256 (SLFTYSSSTQANGNGADSQTPS) and 384–399 (EAQTNKSSVTAASQSG). The span at 734-744 (STGVATTATTS) shows a compositional bias: low complexity. The Autotransporter domain occupies 1379-1672 (DDAAYNNFWV…MTSCGARMIF (294 aa)).

The protein belongs to the PMP outer membrane protein family.

Its subcellular location is the secreted. The protein localises to the cell wall. It localises to the cell outer membrane. This Chlamydia muridarum (strain MoPn / Nigg) protein is Probable outer membrane protein PmpB (pmpB).